Reading from the N-terminus, the 163-residue chain is Interleukin-17F (163 aa).

A signal peptide spans 1-30 (MTVKSLHVTAMVKYLLLLILGLAFLRETAA). Asn-83 carries N-linked (GlcNAc...) asparagine glycosylation. 2 disulfide bridges follow: Cys-102–Cys-152 and Cys-107–Cys-154.

This sequence belongs to the IL-17 family. Homodimer; disulfide-linked. Heterodimer with IL17A (IL17A-IL17F). Forms complexes with IL17RA and IL17RC receptors with 2:1 binding stoichiometry: two receptor chains for one interleukin molecule. IL17F homodimer forms predominantly complexes with IL17RC homodimer, whereas IL17A-IL17F favors complexes with IL17RA-IL17RC. IL17RA and IL17RC chains cannot distinguish between IL17A and IL17F molecules, potentially enabling the formation of topologically distinct complexes.

The protein localises to the secreted. Its function is as follows. Effector cytokine of innate and adaptive immune system involved in antimicrobial host defense and maintenance of tissue integrity. IL17A-IL17F signals via IL17RA-IL17RC heterodimeric receptor complex, triggering homotypic interaction of IL17RA and IL17RC chains with TRAF3IP2 adapter through SEFIR domains. This leads to downstream TRAF6-mediated activation of NF-kappa-B and MAPkinase pathways ultimately resulting in transcriptional activation of cytokines, chemokines, antimicrobial peptides and matrix metalloproteinases, with potential strong immune inflammation. IL17A-IL17F is primarily involved in host defense against extracellular bacteria and fungi by inducing neutrophilic inflammation. As signature effector cytokine of T-helper 17 cells (Th17), primarily induces neutrophil activation and recruitment at infection and inflammatory sites. Stimulates the production of antimicrobial beta-defensins DEFB1, DEFB103A, and DEFB104A by mucosal epithelial cells, limiting the entry of microbes through the epithelial barriers. IL17F homodimer can signal via IL17RC homodimeric receptor complex, triggering downstream activation of TRAF6 and NF-kappa-B signaling pathway. Via IL17RC induces transcriptional activation of IL33, a potent cytokine that stimulates group 2 innate lymphoid cells and adaptive T-helper 2 cells involved in pulmonary allergic response to fungi. Likely via IL17RC, promotes sympathetic innervation of peripheral organs by coordinating the communication between gamma-delta T cells and parenchymal cells. Stimulates sympathetic innervation of thermogenic adipose tissue by driving TGFB1 expression. Regulates the composition of intestinal microbiota and immune tolerance by inducing antimicrobial proteins that specifically control the growth of commensal Firmicutes and Bacteroidetes. The protein is Interleukin-17F (IL17F) of Callithrix jacchus (White-tufted-ear marmoset).